Consider the following 116-residue polypeptide: Non-specific lipid-transfer protein 5 (116 aa).

The first 24 residues, 1-24, serve as a signal peptide directing secretion; it reads MARSMKLACVVLVMCMIVAPMAEG. 4 disulfide bridges follow: C28-C75, C38-C52, C53-C98, and C73-C112.

It belongs to the plant LTP family.

Plant non-specific lipid-transfer proteins transfer phospholipids as well as galactolipids across membranes. May play a role in wax or cutin deposition in the cell walls of expanding epidermal cells and certain secretory tissues. This is Non-specific lipid-transfer protein 5 from Lens culinaris (Lentil).